We begin with the raw amino-acid sequence, 388 residues long: Succinate--CoA ligase [ADP-forming] subunit beta (388 aa).

The 236-residue stretch at 9–244 (KQLFARYGLP…QSQEDPREAQ (236 aa)) folds into the ATP-grasp domain. ATP-binding positions include lysine 46, 53 to 55 (GRG), glutamate 99, threonine 102, and glutamate 107. 2 residues coordinate Mg(2+): asparagine 199 and aspartate 213. Substrate contacts are provided by residues asparagine 264 and 321 to 323 (GIV).

The protein belongs to the succinate/malate CoA ligase beta subunit family. Heterotetramer of two alpha and two beta subunits. The cofactor is Mg(2+).

The catalysed reaction is succinate + ATP + CoA = succinyl-CoA + ADP + phosphate. The enzyme catalyses GTP + succinate + CoA = succinyl-CoA + GDP + phosphate. The protein operates within carbohydrate metabolism; tricarboxylic acid cycle; succinate from succinyl-CoA (ligase route): step 1/1. Its function is as follows. Succinyl-CoA synthetase functions in the citric acid cycle (TCA), coupling the hydrolysis of succinyl-CoA to the synthesis of either ATP or GTP and thus represents the only step of substrate-level phosphorylation in the TCA. The beta subunit provides nucleotide specificity of the enzyme and binds the substrate succinate, while the binding sites for coenzyme A and phosphate are found in the alpha subunit. This is Succinate--CoA ligase [ADP-forming] subunit beta from Escherichia coli O139:H28 (strain E24377A / ETEC).